We begin with the raw amino-acid sequence, 469 residues long: 3-isopropylmalate dehydratase large subunit (469 aa).

Positions 350, 410, and 413 each coordinate [4Fe-4S] cluster.

This sequence belongs to the aconitase/IPM isomerase family. LeuC type 1 subfamily. As to quaternary structure, heterodimer of LeuC and LeuD. The cofactor is [4Fe-4S] cluster.

It carries out the reaction (2R,3S)-3-isopropylmalate = (2S)-2-isopropylmalate. Its pathway is amino-acid biosynthesis; L-leucine biosynthesis; L-leucine from 3-methyl-2-oxobutanoate: step 2/4. Catalyzes the isomerization between 2-isopropylmalate and 3-isopropylmalate, via the formation of 2-isopropylmaleate. The chain is 3-isopropylmalate dehydratase large subunit from Mesorhizobium japonicum (strain LMG 29417 / CECT 9101 / MAFF 303099) (Mesorhizobium loti (strain MAFF 303099)).